The chain runs to 105 residues: MHIKKGDNVIVISGKDKGKTGVVQSTEPKKDRVVVEGVNIIKKHQKPTQFNPEGGILETEAPIHVSNVQLLDPKTNEPTRVGYKFVDGKKIRIAKKSGEEIKSNN.

It belongs to the universal ribosomal protein uL24 family. As to quaternary structure, part of the 50S ribosomal subunit.

Its function is as follows. One of two assembly initiator proteins, it binds directly to the 5'-end of the 23S rRNA, where it nucleates assembly of the 50S subunit. In terms of biological role, one of the proteins that surrounds the polypeptide exit tunnel on the outside of the subunit. The chain is Large ribosomal subunit protein uL24 from Staphylococcus carnosus (strain TM300).